A 414-amino-acid chain; its full sequence is Bifunctional protein GlmU (414 aa).

A pyrophosphorylase region spans residues 1 to 208 (MDAVILCAGS…SSKLYGIELN (208 aa)). UTP-binding positions include 6–9 (LCAG), Q74, and G79. Residues T80, G130, N142, and N162 each coordinate N-acetyl-alpha-D-glucosamine 1-phosphate. The linker stretch occupies residues 209–228 (GYWNDIGRPWDVLSANNYFL). An N-acetyltransferase region spans residues 229–414 (KNIMPKISGN…KDELIIKKRN (186 aa)). Residue H312 is the Proton acceptor of the active site. The acetyl-CoA site is built by A388 and K405.

The protein in the N-terminal section; belongs to the N-acetylglucosamine-1-phosphate uridyltransferase family. In the C-terminal section; belongs to the transferase hexapeptide repeat family.

The enzyme catalyses N-acetyl-alpha-D-glucosamine 1-phosphate + UTP + H(+) = UDP-N-acetyl-alpha-D-glucosamine + diphosphate. It catalyses the reaction alpha-D-glucosamine 1-phosphate + acetyl-CoA = N-acetyl-alpha-D-glucosamine 1-phosphate + CoA + H(+). Its pathway is nucleotide-sugar biosynthesis; UDP-N-acetyl-alpha-D-glucosamine biosynthesis; N-acetyl-alpha-D-glucosamine 1-phosphate from alpha-D-glucosamine 6-phosphate (route II): step 2/2. The protein operates within nucleotide-sugar biosynthesis; UDP-N-acetyl-alpha-D-glucosamine biosynthesis; UDP-N-acetyl-alpha-D-glucosamine from N-acetyl-alpha-D-glucosamine 1-phosphate: step 1/1. Catalyzes the last two sequential reactions in the de novo biosynthetic pathway for UDP-N-acetyl-glucosamine (UDP-GlcNAc). Responsible for the acetylation of GlcN-1-P to GlcNAc-1-P, and for the uridyl transfer from UTP to GlcNAc-1-P, to produce UDP-GlcNAc and pyrophosphate. In Methanococcus vannielii (strain ATCC 35089 / DSM 1224 / JCM 13029 / OCM 148 / SB), this protein is Bifunctional protein GlmU.